Consider the following 81-residue polypeptide: MTMSLEVFEKLEAKVQQAIDTITLLQMEIEELKEKNNSLSQEVQNAQHQREELERENNHLKEQQNGWQERLQALLGRMEEV.

The stretch at 5–81 (LEVFEKLEAK…QALLGRMEEV (77 aa)) forms a coiled coil. Position 10 is an N6-acetyllysine (lysine 10). The interval 36 to 67 (NNSLSQEVQNAQHQREELERENNHLKEQQNGW) is disordered. Residues 37–47 (NSLSQEVQNAQ) show a composition bias toward polar residues. A compositionally biased stretch (basic and acidic residues) spans 48–62 (HQREELERENNHLKE).

The protein belongs to the ZapB family. As to quaternary structure, homodimer. The ends of the coiled-coil dimer bind to each other, forming polymers. Interacts with FtsZ.

It localises to the cytoplasm. Non-essential, abundant cell division factor that is required for proper Z-ring formation. It is recruited early to the divisome by direct interaction with FtsZ, stimulating Z-ring assembly and thereby promoting cell division earlier in the cell cycle. Its recruitment to the Z-ring requires functional FtsA or ZipA. This chain is Cell division protein ZapB, found in Shigella boydii serotype 4 (strain Sb227).